The sequence spans 59 residues: DNA gyrase inhibitor YacG (59 aa).

C7, C10, C25, and C29 together coordinate Zn(2+).

It belongs to the DNA gyrase inhibitor YacG family. In terms of assembly, interacts with GyrB. Zn(2+) is required as a cofactor.

Its function is as follows. Inhibits all the catalytic activities of DNA gyrase by preventing its interaction with DNA. Acts by binding directly to the C-terminal domain of GyrB, which probably disrupts DNA binding by the gyrase. The protein is DNA gyrase inhibitor YacG of Geobacter sulfurreducens (strain ATCC 51573 / DSM 12127 / PCA).